The sequence spans 158 residues: Crossover junction endodeoxyribonuclease RuvC (158 aa).

Active-site residues include Asp7, Glu67, and Asp140. Residues Asp7, Glu67, and Asp140 each contribute to the Mg(2+) site.

Belongs to the RuvC family. In terms of assembly, homodimer which binds Holliday junction (HJ) DNA. The HJ becomes 2-fold symmetrical on binding to RuvC with unstacked arms; it has a different conformation from HJ DNA in complex with RuvA. In the full resolvosome a probable DNA-RuvA(4)-RuvB(12)-RuvC(2) complex forms which resolves the HJ. The cofactor is Mg(2+).

The protein localises to the cytoplasm. It catalyses the reaction Endonucleolytic cleavage at a junction such as a reciprocal single-stranded crossover between two homologous DNA duplexes (Holliday junction).. In terms of biological role, the RuvA-RuvB-RuvC complex processes Holliday junction (HJ) DNA during genetic recombination and DNA repair. Endonuclease that resolves HJ intermediates. Cleaves cruciform DNA by making single-stranded nicks across the HJ at symmetrical positions within the homologous arms, yielding a 5'-phosphate and a 3'-hydroxyl group; requires a central core of homology in the junction. The consensus cleavage sequence is 5'-(A/T)TT(C/G)-3'. Cleavage occurs on the 3'-side of the TT dinucleotide at the point of strand exchange. HJ branch migration catalyzed by RuvA-RuvB allows RuvC to scan DNA until it finds its consensus sequence, where it cleaves and resolves the cruciform DNA. The sequence is that of Crossover junction endodeoxyribonuclease RuvC from Dictyoglomus turgidum (strain DSM 6724 / Z-1310).